The chain runs to 23 residues: Magainin-B2 (23 aa).

Expressed by the skin glands.

The protein localises to the secreted. In terms of biological role, has antimicrobial activity against Gram-negative bacterium E.coli ATCC 25922 (MIC=50 uM) and against fungus C.albicans ATCC 90028 (MIC=100 uM). Has no hemolytic activity against human erythrocytes even at high concentrations. This chain is Magainin-B2, found in Xenopus borealis (Kenyan clawed frog).